We begin with the raw amino-acid sequence, 246 residues long: Small ribosomal subunit protein uS2 (246 aa).

Belongs to the universal ribosomal protein uS2 family.

The chain is Small ribosomal subunit protein uS2 from Burkholderia cenocepacia (strain ATCC BAA-245 / DSM 16553 / LMG 16656 / NCTC 13227 / J2315 / CF5610) (Burkholderia cepacia (strain J2315)).